The following is a 191-amino-acid chain: Putative glutathione-dependent formaldehyde-activating enzyme (191 aa).

Residues 20–166 (FAGGNLYCKC…FKAVGLETYD (147 aa)) form the CENP-V/GFA domain. Cys27, Cys29, Cys48, Cys50, Cys53, Cys95, and Cys98 together coordinate Zn(2+).

Belongs to the Gfa family. The cofactor is Zn(2+).

It carries out the reaction S-(hydroxymethyl)glutathione = glutathione + formaldehyde. The protein operates within one-carbon metabolism; formaldehyde degradation; formate from formaldehyde (glutathione route): step 1/3. Catalyzes the condensation of formaldehyde and glutathione to S-hydroxymethylglutathione. The chain is Putative glutathione-dependent formaldehyde-activating enzyme from Aspergillus terreus (strain NIH 2624 / FGSC A1156).